We begin with the raw amino-acid sequence, 1165 residues long: Serine/threonine-protein kinase/endoribonuclease ireA (1165 aa).

The first 27 residues, 1 to 27, serve as a signal peptide directing secretion; the sequence is MRWRLPGARTTLPASVALLLLPILVAP. Residues 28–504 lie on the Lumenal side of the membrane; it reads QQLQEHDDLP…STIIRKGWDN (477 aa). Asn152 is a glycosylation site (N-linked (GlcNAc...) asparagine). The chain crosses the membrane as a helical span at residues 505–525; the sequence is AVDIFVTILLLFFGAFIYFNS. The Cytoplasmic portion of the chain corresponds to 526 to 1165; it reads HNIQELAKQK…RFKRYFTPVE (640 aa). The tract at residues 547 to 668 is disordered; it reads QPPLSTPSTP…SEGESKDQAD (122 aa). 2 stretches are compositionally biased toward basic and acidic residues: residues 591–600 and 611–620; these read ATPKPKRDRS and KIREPSRGPD. The segment covering 637-655 has biased composition (basic residues); that stretch reads PKKKARRGRRGGKNHRRGK. The segment covering 656-668 has biased composition (basic and acidic residues); it reads KPDSEGESKDQAD. The Protein kinase domain maps to 711–1026; sequence VFSDVVLGHG…ASAVLMHPFF (316 aa). ATP is bound by residues 717–725 and Lys739; that span reads LGHGSHGTV. Residue Asp832 is the Proton acceptor of the active site. Residues 899–919 are disordered; sequence AIQGGESQHTESSEPAVVDPQ. The 135-residue stretch at 1029 to 1163 folds into the KEN domain; that stretch reads PSDRLSFLCD…IDRFKRYFTP (135 aa).

This sequence belongs to the protein kinase superfamily. Ser/Thr protein kinase family. In terms of assembly, homodimer; in response to the accumulation of unfolded proteins. The cofactor is Mg(2+). In terms of processing, autophosphorylated mainly on serine residues.

Its subcellular location is the membrane. It catalyses the reaction L-seryl-[protein] + ATP = O-phospho-L-seryl-[protein] + ADP + H(+). It carries out the reaction L-threonyl-[protein] + ATP = O-phospho-L-threonyl-[protein] + ADP + H(+). 8-formyl-7-hydroxy-4-methylcoumarin inhibits the endonuclease activity and prebvent the splicing if the hacA mRNA. The kinase domain is activated by trans-autophosphorylation. Kinase activity is required for activation of the endoribonuclease domain. Its function is as follows. Senses unfolded proteins in the lumen of the endoplasmic reticulum (ER) via its N-terminal domain which leads to enzyme auto-activation. The active endoribonuclease domain responds by cleaving an intron from the downstream cytoplasmic mRNA hacA, allowing for the translation of a transcription factor that coordinates a series of adaptive responses that are collectively known as the unfolded protein response (UPR). In the absence of ER stress, ireA controls dual signaling circuits that are both hacA-dependent and hacA-independent and which contribute to the expression of traits that are essential for virulence. This is Serine/threonine-protein kinase/endoribonuclease ireA from Aspergillus fumigatus (strain ATCC MYA-4609 / CBS 101355 / FGSC A1100 / Af293) (Neosartorya fumigata).